We begin with the raw amino-acid sequence, 160 residues long: uncharacterized protein (160 aa).

The N-acetyltransferase domain maps to 2–140 (MIIIPNNEIA…KARRLKPEIP (139 aa)).

This is an uncharacterized protein from Bacillus subtilis (strain 168).